Reading from the N-terminus, the 149-residue chain is Phosphoribosyl-AMP cyclohydrolase (149 aa).

D92 provides a ligand contact to Mg(2+). C93 is a binding site for Zn(2+). Positions 94 and 96 each coordinate Mg(2+). 2 residues coordinate Zn(2+): C111 and C118.

The protein belongs to the PRA-CH family. Homodimer. It depends on Mg(2+) as a cofactor. Requires Zn(2+) as cofactor.

Its subcellular location is the cytoplasm. It carries out the reaction 1-(5-phospho-beta-D-ribosyl)-5'-AMP + H2O = 1-(5-phospho-beta-D-ribosyl)-5-[(5-phospho-beta-D-ribosylamino)methylideneamino]imidazole-4-carboxamide. The protein operates within amino-acid biosynthesis; L-histidine biosynthesis; L-histidine from 5-phospho-alpha-D-ribose 1-diphosphate: step 3/9. Its function is as follows. Catalyzes the hydrolysis of the adenine ring of phosphoribosyl-AMP. This is Phosphoribosyl-AMP cyclohydrolase from Rhizobium rhizogenes (strain K84 / ATCC BAA-868) (Agrobacterium radiobacter).